The sequence spans 388 residues: Formate-dependent phosphoribosylglycinamide formyltransferase (388 aa).

Residues 21–22 (EL) and Glu-81 each bind N(1)-(5-phospho-beta-D-ribosyl)glycinamide. Residues Arg-113, Lys-154, 159-164 (SSGHGQ), 193-196 (EEFI), and Glu-201 each bind ATP. The ATP-grasp domain occupies 118–306 (KFAAEELGLK…EFALHVRAVL (189 aa)). Residues Glu-265 and Glu-277 each contribute to the Mg(2+) site. N(1)-(5-phospho-beta-D-ribosyl)glycinamide-binding positions include Asp-284, Lys-352, and 359–360 (RR).

The protein belongs to the PurK/PurT family. As to quaternary structure, homodimer.

The catalysed reaction is N(1)-(5-phospho-beta-D-ribosyl)glycinamide + formate + ATP = N(2)-formyl-N(1)-(5-phospho-beta-D-ribosyl)glycinamide + ADP + phosphate + H(+). It functions in the pathway purine metabolism; IMP biosynthesis via de novo pathway; N(2)-formyl-N(1)-(5-phospho-D-ribosyl)glycinamide from N(1)-(5-phospho-D-ribosyl)glycinamide (formate route): step 1/1. Functionally, involved in the de novo purine biosynthesis. Catalyzes the transfer of formate to 5-phospho-ribosyl-glycinamide (GAR), producing 5-phospho-ribosyl-N-formylglycinamide (FGAR). Formate is provided by PurU via hydrolysis of 10-formyl-tetrahydrofolate. The polypeptide is Formate-dependent phosphoribosylglycinamide formyltransferase (Nitratiruptor sp. (strain SB155-2)).